The chain runs to 263 residues: Acidic leucine-rich nuclear phosphoprotein 32 family member A (263 aa).

4 LRR repeats span residues 16–37, 39–60, 61–83, and 84–105; these read QIQE…TDEY, ALES…PKLP, NLKK…TTSP, and KLQY…KPLE. The region spanning 118–156 is the LRRCT domain; that stretch reads NDATQVDNYREKIFKMLPSLNFLDGFDCNDEEAQSEGDD. 2 stretches are compositionally biased toward acidic residues: residues 144–189 and 198–232; these read DCND…DGDN and YNDD…DGEA. The disordered stretch occupies residues 144–263; that stretch reads DCNDEEAQSE…ARGKKRKHDG (120 aa). The segment covering 242–254 has biased composition (basic and acidic residues); sequence SKKEPEKTDESQA.

This sequence belongs to the ANP32 family. Phosphorylated on serine residues.

The protein resides in the nucleus. The protein localises to the cytoplasm. Its function is as follows. Implicated in a number of cellular processes, including proliferation, differentiation, caspase-dependent and caspase-independent apoptosis, suppression of transformation (tumor suppressor), inhibition of protein phosphatase 2A, regulation of mRNA trafficking and stability, and inhibition of acetyltransferases as part of the INHAT (inhibitor of histone acetyltransferases) complex. This chain is Acidic leucine-rich nuclear phosphoprotein 32 family member A (Anp32a), found in Drosophila pseudoobscura pseudoobscura (Fruit fly).